The primary structure comprises 369 residues: Aminomethyltransferase (369 aa).

It belongs to the GcvT family. As to quaternary structure, the glycine cleavage system is composed of four proteins: P, T, L and H.

The enzyme catalyses N(6)-[(R)-S(8)-aminomethyldihydrolipoyl]-L-lysyl-[protein] + (6S)-5,6,7,8-tetrahydrofolate = N(6)-[(R)-dihydrolipoyl]-L-lysyl-[protein] + (6R)-5,10-methylene-5,6,7,8-tetrahydrofolate + NH4(+). Functionally, the glycine cleavage system catalyzes the degradation of glycine. This Synechococcus sp. (strain CC9311) protein is Aminomethyltransferase.